The chain runs to 146 residues: UPF0178 protein Helmi_09130 (146 aa).

Belongs to the UPF0178 family.

The chain is UPF0178 protein Helmi_09130 from Heliobacterium modesticaldum (strain ATCC 51547 / Ice1).